A 425-amino-acid polypeptide reads, in one-letter code: Protein translocase subunit SecY (425 aa).

10 helical membrane passes run 15-35, 62-82, 113-131, 139-159, 168-188, 201-221, 266-286, 304-324, 364-384, and 385-405; these read LLSL…VPGI, TVVV…SIIM, LLTL…FYLK, LVLA…VLWL, LGNG…PGFV, IGSW…IVLL, PIIL…LGLL, IIYW…YSTI, LLGA…QAIL, and SLSG…GVIL.

It belongs to the SecY/SEC61-alpha family. Component of the plastid Sec protein translocase complex, which is composed of at least SecY, SecE and SecG.

Its subcellular location is the plastid. It is found in the chloroplast thylakoid membrane. Its function is as follows. The central subunit of the protein translocation channel SecYE. Consists of two halves formed by TMs 1-5 and 6-10. These two domains form a lateral gate at the front which open onto the bilayer between TMs 2 and 7, and are clamped together by SecE at the back. The channel is closed by both a pore ring composed of hydrophobic SecY resides and a short helix (helix 2A) on the extracellular side of the membrane which forms a plug. The sequence is that of Protein translocase subunit SecY from Trieres chinensis (Marine centric diatom).